A 339-amino-acid polypeptide reads, in one-letter code: Probable protein phosphatase 2C 28 (339 aa).

In terms of domain architecture, PPM-type phosphatase spans Asp-87–Phe-334. Positions 124, 125, 286, and 325 each coordinate Mn(2+).

This sequence belongs to the PP2C family. Mg(2+) serves as cofactor. Requires Mn(2+) as cofactor.

The enzyme catalyses O-phospho-L-seryl-[protein] + H2O = L-seryl-[protein] + phosphate. The catalysed reaction is O-phospho-L-threonyl-[protein] + H2O = L-threonyl-[protein] + phosphate. The protein is Probable protein phosphatase 2C 28 of Arabidopsis thaliana (Mouse-ear cress).